The chain runs to 360 residues: Ferredoxin--NADP reductase, leaf isozyme 1, chloroplastic (360 aa).

The transit peptide at 1–49 directs the protein to the chloroplast; sequence MAAAISAAVSLPSSKSSSLLTKISSVSPQRIFLKKSTVCYRRVVSVKAQ. One can recognise an FAD-binding FR-type domain in the interval 81 to 203; that stretch reads KNPYTGRCLL…TGPVGKEMLM (123 aa). FAD contacts are provided by residues 139 to 142, 160 to 162, tyrosine 166, and 177 to 179; these read RLYS, CVK, and VCS. NADP(+)-binding residues include serine 142 and lysine 162. A disulfide bond links cysteine 178 and cysteine 183. Serine 179 is subject to Phosphoserine. A Phosphothreonine modification is found at threonine 210. Position 218 (threonine 218) interacts with FAD. NADP(+) contacts are provided by residues threonine 218, 250-251, 280-281, lysine 290, 319-320, and glutamate 358; these read VP, SR, and GL.

It belongs to the ferredoxin--NADP reductase type 1 family. As to quaternary structure, heterodimer with LFNR2. Interacts with PGRL1A and PGRL1B. Interacts with TIC62. Component of high molecular weight thylakoid LFNRs-containing protein complexes containing LIR1, LFNR1, LFNR2, TIC62 and TROL proteins. Interacts directly with LIR1 and TIC62; LIR1 increases the affinity of LFNR1 and LFNR2 for TIC62. Binds to YCF54 in chloroplasts. FAD is required as a cofactor. In terms of processing, may form interchain disulfide bonds with LIR1. Expressed in shoots. Restricted to green tissues, being more abundant in siliques.

It is found in the plastid. It localises to the chloroplast stroma. The protein resides in the chloroplast thylakoid membrane. The catalysed reaction is 2 reduced [2Fe-2S]-[ferredoxin] + NADP(+) + H(+) = 2 oxidized [2Fe-2S]-[ferredoxin] + NADPH. Its pathway is energy metabolism; photosynthesis. In terms of biological role, plays a key role in regulating the relative amounts of cyclic and non-cyclic electron flow to meet the demands of the plant for ATP and reducing power. Probable electron donor required for the MgProto monomethylester (MgProtoME) cyclase complex reaction to form protochlorophyllide, thus connecting chlorophyll synthesis with photosynthetic activity. The protein is Ferredoxin--NADP reductase, leaf isozyme 1, chloroplastic of Arabidopsis thaliana (Mouse-ear cress).